Here is a 439-residue protein sequence, read N- to C-terminus: MAIQKVFARQIYDSRGNPTVEVDLTTETGIHRAIVPSGASTGIWEALEMRDGDKTKWGGKGVLKAVGNVNNIIAPAVVKANLDVTDQKAADEFLLKLDGTENKSKLGANAILGVSMAICRAGAAQKKLPLWKYIAENFGTKGPYVLPVPSFNVLNGGSHAGGDLAFQEFMILPTGAPSFSEAMRWGAETYHTLKSIAKKRYGSSAGNVGDEGGIAPDLQTPQEALDLIVEAINKAGYEGKIKIGLDVASSEFYVDGKYDLDIKAAKPKPENKLTYQQLTDLYVELSKKYPIVSIEDPFDQDDWSAWTHMKAETDFQIVGDDLTVTNVKRLRTAIDKKCANALLLKVNQIGSVTESLNAVRMSYEAGWGVMVSHRSGETADTFISHLTVGIGAGQLKSGAPCRSERLAKYNELLRIEEELGSEGVYAGAHAGKYIKAAKF.

Phosphothreonine is present on threonine 85. The substrate site is built by histidine 159 and glutamate 168. The Proton donor role is filled by glutamate 211. Mg(2+) is bound at residue aspartate 246. Residues serine 249 and serine 250 each carry the phosphoserine modification. Phosphotyrosine is present on tyrosine 253. Substrate-binding residues include glutamate 295 and aspartate 320. Residues glutamate 295 and aspartate 320 each contribute to the Mg(2+) site. The Proton acceptor role is filled by lysine 345. Residue serine 351 is modified to Phosphoserine. Residue threonine 353 is modified to Phosphothreonine. Phosphoserine is present on serine 355. Substrate contacts are provided by residues 372-375 and lysine 396; that span reads SHRS. The residue at position 421 (serine 421) is a Phosphoserine.

This sequence belongs to the enolase family. Homodimer. The cofactor is Mg(2+).

The protein localises to the cytoplasm. It catalyses the reaction (2R)-2-phosphoglycerate = phosphoenolpyruvate + H2O. Its pathway is carbohydrate degradation; glycolysis; pyruvate from D-glyceraldehyde 3-phosphate: step 4/5. In Schizosaccharomyces pombe (strain 972 / ATCC 24843) (Fission yeast), this protein is Enolase 1-1 (eno101).